The chain runs to 405 residues: Probable tRNA sulfurtransferase (405 aa).

Residues 60 to 165 form the THUMP domain; that stretch reads QEVSASLKKI…PDAAYISHEE (106 aa). Residues 183 to 184, 208 to 209, R265, G287, and Q296 each bind ATP; these read ML and HF.

The protein belongs to the ThiI family.

It localises to the cytoplasm. The catalysed reaction is [ThiI sulfur-carrier protein]-S-sulfanyl-L-cysteine + a uridine in tRNA + 2 reduced [2Fe-2S]-[ferredoxin] + ATP + H(+) = [ThiI sulfur-carrier protein]-L-cysteine + a 4-thiouridine in tRNA + 2 oxidized [2Fe-2S]-[ferredoxin] + AMP + diphosphate. It catalyses the reaction [ThiS sulfur-carrier protein]-C-terminal Gly-Gly-AMP + S-sulfanyl-L-cysteinyl-[cysteine desulfurase] + AH2 = [ThiS sulfur-carrier protein]-C-terminal-Gly-aminoethanethioate + L-cysteinyl-[cysteine desulfurase] + A + AMP + 2 H(+). It functions in the pathway cofactor biosynthesis; thiamine diphosphate biosynthesis. In terms of biological role, catalyzes the ATP-dependent transfer of a sulfur to tRNA to produce 4-thiouridine in position 8 of tRNAs, which functions as a near-UV photosensor. Also catalyzes the transfer of sulfur to the sulfur carrier protein ThiS, forming ThiS-thiocarboxylate. This is a step in the synthesis of thiazole, in the thiamine biosynthesis pathway. The sulfur is donated as persulfide by IscS. The polypeptide is Probable tRNA sulfurtransferase (Streptococcus suis (strain 98HAH33)).